The primary structure comprises 1792 residues: Brefeldin A-inhibited guanine nucleotide-exchange protein 2 (1792 aa).

Methionine 1 carries the post-translational modification N-acetylmethionine. Residues 2–224 (QESQTKSMFV…KPQSPVIQAT (223 aa)) are DCB; DCB:DCB domain and DCB:HUS domain interaction. The segment at 207 to 294 (ELEKPMQSKP…SRGTDSGAQE (88 aa)) is disordered. Serine 214, serine 218, and serine 227 each carry phosphoserine. Polar residues predominate over residues 214-225 (SKPQSPVIQATA). Residues 233-243 (LKQSQAQSKPT) are compositionally biased toward polar residues. Threonine 244 carries the post-translational modification Phosphothreonine. 2 positions are modified to phosphoserine: serine 355 and serine 356. Residues 515 to 535 (ADAQCVVDIYVNYDCDLNAAN) are HUS; DCB:HUS domain interaction. The residue at position 621 (serine 621) is a Phosphoserine. Threonine 623 carries the post-translational modification Phosphothreonine. Serine 624 is subject to Phosphoserine. Phosphothreonine is present on threonine 633. Positions 661-792 (FNKKPKRGIQ…IIMLTTDLHS (132 aa)) constitute an SEC7 domain. Serine 707, serine 1518, serine 1520, serine 1521, serine 1532, serine 1535, serine 1541, and serine 1789 each carry phosphoserine.

As to quaternary structure, homodimer. Interacts with ARFGEF1/BIG1; both proteins are probably part of the same or very similar macromolecular complexes. Interacts with PRKAR1A, PRKAR2A, PRKAR1B, PRKAR2B, PPP1CC, PDE3A, TNFRSF1A, MYCBP and EXOC7. Interacts with GABRB1, GABRB2 and GABRB3. In vitro phosphorylated by PKA reducing its GEF activity and dephosphorylated by phosphatase PP1.

It localises to the cytoplasm. It is found in the membrane. The protein resides in the golgi apparatus. Its subcellular location is the perinuclear region. The protein localises to the trans-Golgi network. It localises to the endosome. It is found in the cytoskeleton. The protein resides in the microtubule organizing center. Its subcellular location is the centrosome. The protein localises to the cell projection. It localises to the dendrite. It is found in the cytoplasmic vesicle. The protein resides in the synapse. Its activity is regulated as follows. Inhibited by brefeldin A. In terms of biological role, promotes guanine-nucleotide exchange on ARF1 and ARF3 and to a lower extent on ARF5 and ARF6. Promotes the activation of ARF1/ARF5/ARF6 through replacement of GDP with GTP. Involved in the regulation of Golgi vesicular transport. Required for the integrity of the endosomal compartment. Involved in trafficking from the trans-Golgi network (TGN) to endosomes and is required for membrane association of the AP-1 complex and GGA1. Seems to be involved in recycling of the transferrin receptor from recycling endosomes to the plasma membrane. Probably is involved in the exit of GABA(A) receptors from the endoplasmic reticulum. Involved in constitutive release of tumor necrosis factor receptor 1 via exosome-like vesicles; the function seems to involve PKA and specifically PRKAR2B. Proposed to act as A kinase-anchoring protein (AKAP) and may mediate crosstalk between Arf and PKA pathways. The sequence is that of Brefeldin A-inhibited guanine nucleotide-exchange protein 2 (Arfgef2) from Mus musculus (Mouse).